The primary structure comprises 119 residues: Large ribosomal subunit protein uL22 (119 aa).

Belongs to the universal ribosomal protein uL22 family. As to quaternary structure, part of the 50S ribosomal subunit.

Functionally, this protein binds specifically to 23S rRNA; its binding is stimulated by other ribosomal proteins, e.g. L4, L17, and L20. It is important during the early stages of 50S assembly. It makes multiple contacts with different domains of the 23S rRNA in the assembled 50S subunit and ribosome. The globular domain of the protein is located near the polypeptide exit tunnel on the outside of the subunit, while an extended beta-hairpin is found that lines the wall of the exit tunnel in the center of the 70S ribosome. This chain is Large ribosomal subunit protein uL22, found in Rickettsia typhi (strain ATCC VR-144 / Wilmington).